The following is a 153-amino-acid chain: Virion assembly protein OPG100 (153 aa).

Belongs to the orthopoxvirus OPG100 family. As to quaternary structure, homodimer. Part of a complex composed of the kinase OPG054, OPG092, OPG114, OPG115, OPG142 and OPG157. Interacts with OPG175.

The protein localises to the virion. It is found in the host cytoplasm. Functionally, late protein which is a part of a large complex required for early virion morphogenesis. This complex participates in the formation of virosomes and the incorporation of virosomal contents into nascent immature virions. Plays a role in DNA packaging during immature virions (IV) formation. The polypeptide is Virion assembly protein OPG100 (OPG100) (Vaccinia virus (strain Western Reserve) (VACV)).